The sequence spans 3172 residues: Erythronolide synthase EryA3 (3172 aa).

The Ketosynthase family 3 (KS3) 1 domain maps to 38 to 452 (GEPIAIVGMA…GTNAHVIVEE (415 aa)). Module stretches follow at residues 41 to 1464 (IAIV…DHYL) and 1492 to 2891 (IAIV…DHIG). The active-site Acyl-thioester intermediate; for beta-ketoacyl synthase 1 activity is the C199. Catalysis depends on for beta-ketoacyl synthase 1 activity residues H334 and H374. Positions 557-874 (VFPGQGAQWQ…LGEAYAQGVE (318 aa)) are acyltransferase 1. S643 serves as the catalytic Acyl-ester intermediate; for acyltransferase 1 activity. The tract at residues 1117-1294 (GTVLVTGGTG…VTSIAWGLWA (178 aa)) is beta-ketoacyl reductase 1. Residues 1125 to 1128 (TGGI), 1148 to 1151 (GRRG), 1177 to 1178 (DV), K1229, and 1249 to 1250 (FS) contribute to the NADP(+) site. Y1264 (acyl-ester intermediate; for beta-ketoacyl reductase 1 activity) is an active-site residue. The region spanning 1392–1467 (EHLAHLIRAE…RLADHYLERL (76 aa)) is the Carrier 1 domain. Position 1427 is an O-(pantetheine 4'-phosphoryl)serine (S1427). The 428-residue stretch at 1489–1916 (DDPIAIVGMA…GTNAHVIIAE (428 aa)) folds into the Ketosynthase family 3 (KS3) 2 domain. The Acyl-thioester intermediate; for beta-ketoacyl synthase 2 activity role is filled by C1661. Catalysis depends on for beta-ketoacyl synthase 2 activity residues H1797 and H1837. Positions 2022–2331 (VFVFPGQGAQ…LARAHVHGVA (310 aa)) are acyltransferase 2. Catalysis depends on S2112, which acts as the Acyl-ester intermediate; for acyltransferase 2 activity. Positions 2557–2731 (GTALVTGGTG…ATSVAWGAWA (175 aa)) are beta-ketoacyl reductase 2. NADP(+)-binding positions include 2565-2568 (TGAL), 2588-2591 (SRRG), 2617-2618 (DV), K2666, and 2686-2687 (FS). The active-site Acyl-ester intermediate; for beta-ketoacyl reductase 2 activity is Y2701. One can recognise a Carrier 2 domain in the interval 2819 to 2894 (QELLEFTHSH…RLADHIGQQL (76 aa)). S2854 is modified (O-(pantetheine 4'-phosphoryl)serine). Residues 2960–3166 (ICCAGTAAIS…DAIARHIDAW (207 aa)) are thioesterase. T2965 contacts substrate. The active-site Nucleophile; for thioesterase activity is S3031. Substrate contacts are provided by A3032 and D3058. Catalysis depends on H3148, which acts as the Proton acceptor; for thioesterase activity.

Homodimer. Erythronolide synthase is composed of EryAI, EryAII and EryAIII multimodular (2 modules) polypeptides each coding for a functional synthase subunit which participates in 2 of the six FAS-like elongation steps required for formation of the polyketide. Module 1, 2, 3, 4, 5, and 6 participating in biosynthesis steps 1, 2, 3, 4, 5, and 6, respectively. The cofactor is pantetheine 4'-phosphate.

The enzyme catalyses 6 (S)-methylmalonyl-CoA + propanoyl-CoA + 6 NADPH + 12 H(+) = 6-deoxyerythronolide B + 6 CO2 + 6 NADP(+) + 7 CoA + H2O. It functions in the pathway antibiotic biosynthesis; erythromycin biosynthesis. With respect to regulation, inhibited by diphenyl phosphonates derivatives such as diphenyl allylphosphonate. Its function is as follows. Involved in the biosynthesis of antibiotic erythromycin via the biosynthesis of its aglycone precursor, 6-deoxyerythronolide B (6-dEB). This Saccharopolyspora erythraea (Streptomyces erythraeus) protein is Erythronolide synthase EryA3.